We begin with the raw amino-acid sequence, 444 residues long: Na(+)-translocating NADH-quinone reductase subunit A (444 aa).

The protein belongs to the NqrA family. As to quaternary structure, composed of six subunits; NqrA, NqrB, NqrC, NqrD, NqrE and NqrF.

It carries out the reaction a ubiquinone + n Na(+)(in) + NADH + H(+) = a ubiquinol + n Na(+)(out) + NAD(+). Its function is as follows. NQR complex catalyzes the reduction of ubiquinone-1 to ubiquinol by two successive reactions, coupled with the transport of Na(+) ions from the cytoplasm to the periplasm. NqrA to NqrE are probably involved in the second step, the conversion of ubisemiquinone to ubiquinol. The protein is Na(+)-translocating NADH-quinone reductase subunit A of Shewanella amazonensis (strain ATCC BAA-1098 / SB2B).